Here is a 90-residue protein sequence, read N- to C-terminus: MLDIINRLLGRENAGSRDIARERLRLVLIHDRASVSPNFLNALKEELIRVIREYMEIDEESLIVDLENEENSVALVANIPIRGFKRAANE.

The protein belongs to the MinE family.

Prevents the cell division inhibition by proteins MinC and MinD at internal division sites while permitting inhibition at polar sites. This ensures cell division at the proper site by restricting the formation of a division septum at the midpoint of the long axis of the cell. This Syntrophomonas wolfei subsp. wolfei (strain DSM 2245B / Goettingen) protein is Cell division topological specificity factor 2.